The chain runs to 268 residues: 4-hydroxy-tetrahydrodipicolinate reductase (268 aa).

Residues 10–15 (GSTGRM), glutamate 36, 99–101 (GTT), and 123–126 (APNM) each bind NAD(+). The Proton donor/acceptor role is filled by histidine 156. A (S)-2,3,4,5-tetrahydrodipicolinate-binding site is contributed by histidine 157. The active-site Proton donor is lysine 160. A (S)-2,3,4,5-tetrahydrodipicolinate-binding site is contributed by 166 to 167 (GT).

The protein belongs to the DapB family.

The protein localises to the cytoplasm. The enzyme catalyses (S)-2,3,4,5-tetrahydrodipicolinate + NAD(+) + H2O = (2S,4S)-4-hydroxy-2,3,4,5-tetrahydrodipicolinate + NADH + H(+). The catalysed reaction is (S)-2,3,4,5-tetrahydrodipicolinate + NADP(+) + H2O = (2S,4S)-4-hydroxy-2,3,4,5-tetrahydrodipicolinate + NADPH + H(+). Its pathway is amino-acid biosynthesis; L-lysine biosynthesis via DAP pathway; (S)-tetrahydrodipicolinate from L-aspartate: step 4/4. Functionally, catalyzes the conversion of 4-hydroxy-tetrahydrodipicolinate (HTPA) to tetrahydrodipicolinate. The protein is 4-hydroxy-tetrahydrodipicolinate reductase of Nitrosomonas eutropha (strain DSM 101675 / C91 / Nm57).